We begin with the raw amino-acid sequence, 424 residues long: Histidine--tRNA ligase (424 aa).

Belongs to the class-II aminoacyl-tRNA synthetase family. Homodimer.

It is found in the cytoplasm. The catalysed reaction is tRNA(His) + L-histidine + ATP = L-histidyl-tRNA(His) + AMP + diphosphate + H(+). The sequence is that of Histidine--tRNA ligase from Edwardsiella ictaluri (strain 93-146).